Consider the following 80-residue polypeptide: Exodeoxyribonuclease 7 small subunit (80 aa).

It belongs to the XseB family. In terms of assembly, heterooligomer composed of large and small subunits.

Its subcellular location is the cytoplasm. The enzyme catalyses Exonucleolytic cleavage in either 5'- to 3'- or 3'- to 5'-direction to yield nucleoside 5'-phosphates.. Bidirectionally degrades single-stranded DNA into large acid-insoluble oligonucleotides, which are then degraded further into small acid-soluble oligonucleotides. The protein is Exodeoxyribonuclease 7 small subunit of Pseudomonas fluorescens (strain ATCC BAA-477 / NRRL B-23932 / Pf-5).